The following is a 107-amino-acid chain: Large ribosomal subunit protein uL24 (107 aa).

The protein belongs to the universal ribosomal protein uL24 family. In terms of assembly, part of the 50S ribosomal subunit.

One of two assembly initiator proteins, it binds directly to the 5'-end of the 23S rRNA, where it nucleates assembly of the 50S subunit. Functionally, one of the proteins that surrounds the polypeptide exit tunnel on the outside of the subunit. This Nitratidesulfovibrio vulgaris (strain DSM 19637 / Miyazaki F) (Desulfovibrio vulgaris) protein is Large ribosomal subunit protein uL24.